The chain runs to 467 residues: Glutamate--tRNA ligase (467 aa).

The short motif at 9–19 (PSPTGYLHIGG) is the 'HIGH' region element. Residues 237–241 (KLSKR) carry the 'KMSKS' region motif. Lys-240 serves as a coordination point for ATP.

This sequence belongs to the class-I aminoacyl-tRNA synthetase family. Glutamate--tRNA ligase type 1 subfamily. In terms of assembly, monomer.

It is found in the cytoplasm. It catalyses the reaction tRNA(Glu) + L-glutamate + ATP = L-glutamyl-tRNA(Glu) + AMP + diphosphate. Catalyzes the attachment of glutamate to tRNA(Glu) in a two-step reaction: glutamate is first activated by ATP to form Glu-AMP and then transferred to the acceptor end of tRNA(Glu). This Xanthomonas euvesicatoria pv. vesicatoria (strain 85-10) (Xanthomonas campestris pv. vesicatoria) protein is Glutamate--tRNA ligase.